The sequence spans 569 residues: Arginine--tRNA ligase (569 aa).

The 'HIGH' region motif lies at Ala123–His133.

Belongs to the class-I aminoacyl-tRNA synthetase family.

It is found in the cytoplasm. The catalysed reaction is tRNA(Arg) + L-arginine + ATP = L-arginyl-tRNA(Arg) + AMP + diphosphate. This chain is Arginine--tRNA ligase, found in Methanosarcina barkeri (strain Fusaro / DSM 804).